Consider the following 363-residue polypeptide: Putative agmatine deiminase (363 aa).

The span at 1-10 (MTKQLSTSPK) shows a compositional bias: polar residues. A disordered region spans residues 1–20 (MTKQLSTSPKQDGFRMPAEH). Catalysis depends on C355, which acts as the Amidino-cysteine intermediate.

The protein belongs to the agmatine deiminase family.

The enzyme catalyses agmatine + H2O = N-carbamoylputrescine + NH4(+). The protein is Putative agmatine deiminase of Photobacterium profundum (strain SS9).